We begin with the raw amino-acid sequence, 907 residues long: Probable ubiquitin-conjugating enzyme E2 24 (907 aa).

Disordered regions lie at residues 1-23 (MEMS…EHEE) and 485-509 (SSTV…EASS). Over residues 495 to 509 (QDLSQKISQSDEASS) the composition is skewed to polar residues. In terms of domain architecture, UBC core spans 662–822 (SWVKKVQQEW…AFLITCKSMI (161 aa)). Cys748 functions as the Glycyl thioester intermediate in the catalytic mechanism.

The protein belongs to the ubiquitin-conjugating enzyme family. As to quaternary structure, interacts with PHO1. Interacts with NLA. As to expression, expressed in the vascular tissues of cotyledons, leaves, roots, sepals, filaments, anthers and junctions between the inflorescence stems and siliques.

It localises to the golgi apparatus membrane. The protein localises to the endoplasmic reticulum membrane. The enzyme catalyses S-ubiquitinyl-[E1 ubiquitin-activating enzyme]-L-cysteine + [E2 ubiquitin-conjugating enzyme]-L-cysteine = [E1 ubiquitin-activating enzyme]-L-cysteine + S-ubiquitinyl-[E2 ubiquitin-conjugating enzyme]-L-cysteine.. The protein operates within protein modification; protein ubiquitination. E2 ubiquitin-protein ligase that mediates E1-dependent protein ubiquitination. Mediates PHO1 degradation through multivesicular body-mediated vacuolar proteolysis in response to inorganic phosphate (Pi) availability. Negatively regulates the protein abundance of PHF1 and PHT1s under Pi-sufficient conditions by facilitating the degradation of PHT1 proteins at the endomembrane. Functions cooperatively with NLA to regulate the abundance of the inorganic phosphate (Pi) transporters PHT1-1, PHT1-2 and PHT1-3 in different subcellular compartments. Regulates Pi homeostasis by mediating, cooperatively with NLA, polyubiquitination of PHT1-4 and its targeting for degradation. The polypeptide is Probable ubiquitin-conjugating enzyme E2 24 (Arabidopsis thaliana (Mouse-ear cress)).